Consider the following 393-residue polypeptide: Glutamyl-tRNA reductase (393 aa).

Residues 47–50, S98, 103–105, and Q109 contribute to the substrate site; these read TCGR and ETD. C48 acts as the Nucleophile in catalysis. 177–182 contributes to the NADP(+) binding site; that stretch reads GAGAVG.

It belongs to the glutamyl-tRNA reductase family. In terms of assembly, homodimer.

The catalysed reaction is (S)-4-amino-5-oxopentanoate + tRNA(Glu) + NADP(+) = L-glutamyl-tRNA(Glu) + NADPH + H(+). The protein operates within porphyrin-containing compound metabolism; protoporphyrin-IX biosynthesis; 5-aminolevulinate from L-glutamyl-tRNA(Glu): step 1/2. Catalyzes the NADPH-dependent reduction of glutamyl-tRNA(Glu) to glutamate 1-semialdehyde (GSA). The sequence is that of Glutamyl-tRNA reductase from Pyrobaculum islandicum (strain DSM 4184 / JCM 9189 / GEO3).